We begin with the raw amino-acid sequence, 325 residues long: NADH-quinone oxidoreductase subunit H (325 aa).

Transmembrane regions (helical) follow at residues 11-31, 81-101, 114-134, 154-174, 186-206, 237-257, 265-285, and 304-324; these read VIIAVVKALVILFVVVGCGAF, VIFTLAPMIAFTSLLLAMAIV, IGLLFFLMMAGLAVYAVLFAG, LSYEVFLGLSLMGVVAQAGSF, LWNVIPQFLGFLTFCIAGVAV, FFVGEYVGIVTVSALIVTLFF, LPPVIWFALKTAFFMMMFILI, and VCLPLTLLNLLATAAVILYTA.

Belongs to the complex I subunit 1 family. NDH-1 is composed of 13 different subunits. Subunits NuoA, H, J, K, L, M, N constitute the membrane sector of the complex.

It localises to the cell inner membrane. It catalyses the reaction a quinone + NADH + 5 H(+)(in) = a quinol + NAD(+) + 4 H(+)(out). NDH-1 shuttles electrons from NADH, via FMN and iron-sulfur (Fe-S) centers, to quinones in the respiratory chain. The immediate electron acceptor for the enzyme in this species is believed to be ubiquinone. Couples the redox reaction to proton translocation (for every two electrons transferred, four hydrogen ions are translocated across the cytoplasmic membrane), and thus conserves the redox energy in a proton gradient. This subunit may bind ubiquinone. This Erwinia tasmaniensis (strain DSM 17950 / CFBP 7177 / CIP 109463 / NCPPB 4357 / Et1/99) protein is NADH-quinone oxidoreductase subunit H.